The following is a 616-amino-acid chain: Chaperone protein HscA homolog (616 aa).

Belongs to the heat shock protein 70 family.

Functionally, chaperone involved in the maturation of iron-sulfur cluster-containing proteins. Has a low intrinsic ATPase activity which is markedly stimulated by HscB. This is Chaperone protein HscA homolog from Tolumonas auensis (strain DSM 9187 / NBRC 110442 / TA 4).